Reading from the N-terminus, the 293-residue chain is Acetyl-coenzyme A carboxylase carboxyl transferase subunit beta (293 aa).

Residues 29-293 (LWSKCPECGL…GSKSLELTNA (265 aa)) form the CoA carboxyltransferase N-terminal domain. Zn(2+)-binding residues include Cys-33, Cys-36, Cys-52, and Cys-55. The segment at 33-55 (CPECGLVVYLKDLRLNASVCAGC) adopts a C4-type zinc-finger fold.

This sequence belongs to the AccD/PCCB family. In terms of assembly, acetyl-CoA carboxylase is a heterohexamer composed of biotin carboxyl carrier protein (AccB), biotin carboxylase (AccC) and two subunits each of ACCase subunit alpha (AccA) and ACCase subunit beta (AccD). Requires Zn(2+) as cofactor.

Its subcellular location is the cytoplasm. It catalyses the reaction N(6)-carboxybiotinyl-L-lysyl-[protein] + acetyl-CoA = N(6)-biotinyl-L-lysyl-[protein] + malonyl-CoA. It functions in the pathway lipid metabolism; malonyl-CoA biosynthesis; malonyl-CoA from acetyl-CoA: step 1/1. Its function is as follows. Component of the acetyl coenzyme A carboxylase (ACC) complex. Biotin carboxylase (BC) catalyzes the carboxylation of biotin on its carrier protein (BCCP) and then the CO(2) group is transferred by the transcarboxylase to acetyl-CoA to form malonyl-CoA. The polypeptide is Acetyl-coenzyme A carboxylase carboxyl transferase subunit beta (Synechococcus sp. (strain CC9902)).